We begin with the raw amino-acid sequence, 716 residues long: Probable extracellular serine carboxypeptidase (716 aa).

A signal peptide spans 1 to 17 (MVKLTACLLLLVAAVQA). N-linked (GlcNAc...) asparagine glycans are attached at residues asparagine 143 and asparagine 174. Serine 188 serves as the catalytic Charge relay system. Residues asparagine 258 and asparagine 354 are each glycosylated (N-linked (GlcNAc...) asparagine). Catalysis depends on aspartate 466, which acts as the Charge relay system. N-linked (GlcNAc...) asparagine glycosylation is found at asparagine 507 and asparagine 550. A disordered region spans residues 617 to 636 (RDLAAQPSKSKKDRRGQQLS). The helical transmembrane segment at 652 to 672 (LGFVSFLVFAFSSFTFIPDIE) threads the bilayer.

This sequence belongs to the peptidase S28 family.

It localises to the membrane. It is found in the secreted. In Arthroderma benhamiae (strain ATCC MYA-4681 / CBS 112371) (Trichophyton mentagrophytes), this protein is Probable extracellular serine carboxypeptidase.